The primary structure comprises 408 residues: Putative transporter AmpG 2 (408 aa).

The next 11 membrane-spanning stretches (helical) occupy residues 11 to 31 (IFNI…YLLT), 49 to 69 (IGLF…GPLL), 84 to 104 (YCLV…TSFN), 110 to 130 (IPFV…DMLI), 154 to 174 (FRIG…IISW), 177 to 197 (VYRT…FYPL), 224 to 244 (CIVI…LSIM), 261 to 281 (VGYK…GGFL), 294 to 311 (VLIY…LYFL), 353 to 373 (IALI…ISGY), and 382 to 402 (YFFI…LYLP).

This sequence belongs to the major facilitator superfamily.

It localises to the cell inner membrane. The sequence is that of Putative transporter AmpG 2 (ampG2) from Rickettsia prowazekii (strain Madrid E).